The chain runs to 943 residues: Isoleucine--tRNA ligase (943 aa).

The short motif at 58-68 is the 'HIGH' region element; that stretch reads PYANGKIHIGH. Residue E567 coordinates L-isoleucyl-5'-AMP. Residues 608–612 carry the 'KMSKS' region motif; that stretch reads KMSKS. K611 is an ATP binding site. The Zn(2+) site is built by C906, C909, C926, and C929.

Belongs to the class-I aminoacyl-tRNA synthetase family. IleS type 1 subfamily. Monomer. The cofactor is Zn(2+).

Its subcellular location is the cytoplasm. It carries out the reaction tRNA(Ile) + L-isoleucine + ATP = L-isoleucyl-tRNA(Ile) + AMP + diphosphate. Catalyzes the attachment of isoleucine to tRNA(Ile). As IleRS can inadvertently accommodate and process structurally similar amino acids such as valine, to avoid such errors it has two additional distinct tRNA(Ile)-dependent editing activities. One activity is designated as 'pretransfer' editing and involves the hydrolysis of activated Val-AMP. The other activity is designated 'posttransfer' editing and involves deacylation of mischarged Val-tRNA(Ile). The chain is Isoleucine--tRNA ligase from Pseudomonas putida (strain W619).